A 305-amino-acid chain; its full sequence is MPLLRIATRKSLLAMWQSEYVAARLRMLCPDLDVVLVPMSTRGDEILDRSLAAIGGKGLFLKELELAMLRGDADCAVHSLKDVPMDLEPPFMLAAVLSRDDPADALISNVYLSLESLPIGARVATSSLRRQAQLRFYRPDLRLFDLRGNVNTRLAKLDNGDYDAIVLACAGLRRLGLEQRMTARLAPPEWLPAPGQGAIAVESLTEDARIGTLLAGLDDLPTRKCVIAERTMNRALHGSCHVPVGAYASYEVGGMRLQGLVGCVADGRLVRAELCSAKDEGDMLGRAVAQCLLDAGAAELLAATA.

C240 carries the S-(dipyrrolylmethanemethyl)cysteine modification.

Belongs to the HMBS family. Monomer. The cofactor is dipyrromethane.

The enzyme catalyses 4 porphobilinogen + H2O = hydroxymethylbilane + 4 NH4(+). It functions in the pathway porphyrin-containing compound metabolism; protoporphyrin-IX biosynthesis; coproporphyrinogen-III from 5-aminolevulinate: step 2/4. Its function is as follows. Tetrapolymerization of the monopyrrole PBG into the hydroxymethylbilane pre-uroporphyrinogen in several discrete steps. This Xylella fastidiosa (strain M23) protein is Porphobilinogen deaminase.